The following is a 133-amino-acid chain: MSITMSDSSAYGEELMRERFEHLLKAYEKMALMVAEQEEFNAKIEDMALKLLSEKYDNEAYQAELFYRLSNCVEKVLHNKISITDLKTEYEEILEQTLKKECKAYERSCIENVKLKKRTEQATAYYASSSSEP.

The protein belongs to the VPS13 family. Interacts with spo13 and spo15.

Its subcellular location is the cytoplasm. It is found in the cytoskeleton. It localises to the microtubule organizing center. The protein localises to the spindle pole body. Its function is as follows. Involved in sporulation. Plays a significant role in modification of the spindle pole body prior to spore formation and is required for initiating forespore membrane formation. Assists in the localization of spo13 to the outer surface of the SPB. The chain is Sporulation-specific protein 2 (spo2) from Schizosaccharomyces pombe (strain 972 / ATCC 24843) (Fission yeast).